We begin with the raw amino-acid sequence, 248 residues long: Putative amino-acid ABC transporter-binding protein PatH (248 aa).

A signal peptide spans 1-21 (MKNWIKVAVAAIALSAATVQA).

This sequence belongs to the bacterial solute-binding protein 3 family.

The protein localises to the periplasm. Its function is as follows. Probably part of a binding-protein-dependent transport system for an amino acid. This Vibrio harveyi (Beneckea harveyi) protein is Putative amino-acid ABC transporter-binding protein PatH (patH).